The primary structure comprises 174 residues: Ubiquinone biosynthesis accessory factor UbiT (174 aa).

Positions 45–133 (LDDGELEFLE…LGLYVKNLMD (89 aa)) constitute an SCP2 domain.

This sequence belongs to the UbiT family.

Its pathway is cofactor biosynthesis; ubiquinone biosynthesis. Its function is as follows. Required for O(2)-independent ubiquinone (coenzyme Q) biosynthesis. Likely functions as an accessory factor. The sequence is that of Ubiquinone biosynthesis accessory factor UbiT from Escherichia coli O157:H7.